A 100-amino-acid chain; its full sequence is MGKKDYWVVWRINIDSTVSRSNGRVVPRQLAVDKPTLEEIAKAASMLGLKYEAHPEKKHPRHWFEEDYVGCIYVYKVDDYSRRSLIKKLAQIVKSSRRGG.

It belongs to the SRP19 family. Part of the signal recognition particle protein translocation system, which is composed of SRP and FtsY. Archaeal SRP consists of a 7S RNA molecule of 300 nucleotides and two protein subunits: SRP54 and SRP19.

It localises to the cytoplasm. Functionally, involved in targeting and insertion of nascent membrane proteins into the cytoplasmic membrane. Binds directly to 7S RNA and mediates binding of the 54 kDa subunit of the SRP. This is Signal recognition particle 19 kDa protein from Caldivirga maquilingensis (strain ATCC 700844 / DSM 13496 / JCM 10307 / IC-167).